The primary structure comprises 514 residues: UDP-N-acetylmuramyl-tripeptide synthetase (514 aa).

UDP-N-acetyl-alpha-D-muramoyl-L-alanyl-D-glutamate-binding residues include Leu-44 and Ser-46. Residue 129 to 135 (GTNGKTS) coordinates ATP. UDP-N-acetyl-alpha-D-muramoyl-L-alanyl-D-glutamate is bound by residues 171-172 (TT), Ser-198, and Arg-206. N6-carboxylysine is present on Lys-238.

This sequence belongs to the MurCDEF family. MurE subfamily. In terms of processing, carboxylation is probably crucial for Mg(2+) binding and, consequently, for the gamma-phosphate positioning of ATP.

The protein resides in the cytoplasm. The protein operates within cell wall biogenesis; peptidoglycan biosynthesis. In terms of biological role, catalyzes the addition of an amino acid to the nucleotide precursor UDP-N-acetylmuramoyl-L-alanyl-D-glutamate (UMAG) in the biosynthesis of bacterial cell-wall peptidoglycan. The protein is UDP-N-acetylmuramyl-tripeptide synthetase of Leifsonia xyli subsp. xyli (strain CTCB07).